The primary structure comprises 205 residues: Holliday junction branch migration complex subunit RuvA (205 aa).

The domain I stretch occupies residues 1–64 (MIGRIRGLLV…EDAQLLYGFI (64 aa)). The segment at 65–143 (SKQERALFRL…SLMEASVGSE (79 aa)) is domain II. Residues 144-156 (REFMLQSNYTAPV) are flexible linker. The tract at residues 157 to 205 (VANTAEEDAIAALLSLGYKPAQASKAVSAVYVDGIDSESLIKSALKSML) is domain III.

Belongs to the RuvA family. In terms of assembly, homotetramer. Forms an RuvA(8)-RuvB(12)-Holliday junction (HJ) complex. HJ DNA is sandwiched between 2 RuvA tetramers; dsDNA enters through RuvA and exits via RuvB. An RuvB hexamer assembles on each DNA strand where it exits the tetramer. Each RuvB hexamer is contacted by two RuvA subunits (via domain III) on 2 adjacent RuvB subunits; this complex drives branch migration. In the full resolvosome a probable DNA-RuvA(4)-RuvB(12)-RuvC(2) complex forms which resolves the HJ.

It is found in the cytoplasm. Its function is as follows. The RuvA-RuvB-RuvC complex processes Holliday junction (HJ) DNA during genetic recombination and DNA repair, while the RuvA-RuvB complex plays an important role in the rescue of blocked DNA replication forks via replication fork reversal (RFR). RuvA specifically binds to HJ cruciform DNA, conferring on it an open structure. The RuvB hexamer acts as an ATP-dependent pump, pulling dsDNA into and through the RuvAB complex. HJ branch migration allows RuvC to scan DNA until it finds its consensus sequence, where it cleaves and resolves the cruciform DNA. The polypeptide is Holliday junction branch migration complex subunit RuvA (Shewanella piezotolerans (strain WP3 / JCM 13877)).